Reading from the N-terminus, the 1079-residue chain is Intraflagellar transport protein 80 (1079 aa).

Residues 495-514 (GDMIRPSTVQNQPSTQGLPN) are disordered. Polar residues predominate over residues 501–514 (STVQNQPSTQGLPN).

The protein resides in the cell projection. It localises to the cilium. It is found in the flagellum. The protein localises to the cytoplasm. Its subcellular location is the cytoskeleton. The protein resides in the flagellum axoneme. It localises to the flagellum basal body. In terms of biological role, component of the intraflagellar transport complex B (IFT-B) involved in flagellar assembly. The sequence is that of Intraflagellar transport protein 80 from Giardia intestinalis (strain ATCC 50803 / WB clone C6) (Giardia lamblia).